Consider the following 235-residue polypeptide: Clathrin light chain A (235 aa).

Positions 1–32 are disordered; it reads MAELDPFGAPAGAPGGPALGNGVAGAGEEDPA. The segment covering 13 to 25 has biased composition (gly residues); sequence APGGPALGNGVAG. The interval 99–161 is involved in binding clathrin heavy chain; it reads VDRLQSEPES…QLQKTKANNR (63 aa). 2 positions are modified to phosphoserine: Ser-104 and Ser-193. Lys-210 bears the N6-acetyllysine mark. Residue Ser-223 is modified to Phosphoserine. Lys-229 is subject to N6-acetyllysine.

It belongs to the clathrin light chain family. Clathrin coats are formed from molecules containing 3 heavy chains and 3 light chains. Interacts with CALY; the interaction stimulates clathrin self-assembly and clathrin-mediated endocytosis. Interacts with CKAP5 and TACC3 forming the TACC3/ch-TOG/clathrin complex located at spindle inter-microtubules bridges; the complex implicates clathrin triskelions.

Its subcellular location is the cytoplasmic vesicle membrane. It is found in the membrane. It localises to the coated pit. The protein localises to the cytoplasm. The protein resides in the cytoskeleton. Its subcellular location is the spindle. Clathrin is the major protein of the polyhedral coat of coated pits and vesicles. Acts as a component of the TACC3/ch-TOG/clathrin complex proposed to contribute to stabilization of kinetochore fibers of the mitotic spindle by acting as inter-microtubule bridge. This chain is Clathrin light chain A (Clta), found in Mus musculus (Mouse).